Consider the following 231-residue polypeptide: Monothiol glutaredoxin-6 (231 aa).

The N-terminal stretch at 1 to 29 (MIPSNKRNARILSITTLLLLLVFFVAQNA) is a signal peptide. Residues 116–219 (QKEYSLILDL…ESLQVWSDGK (104 aa)) enclose the Glutaredoxin domain. [2Fe-2S] cluster is bound at residue Cys136.

This sequence belongs to the glutaredoxin family. Monothiol subfamily.

Its subcellular location is the vacuole. The protein is Monothiol glutaredoxin-6 (GRX6) of Saccharomyces cerevisiae (strain ATCC 204508 / S288c) (Baker's yeast).